The chain runs to 103 residues: Large ribosomal subunit protein bL21 (103 aa).

Belongs to the bacterial ribosomal protein bL21 family. In terms of assembly, part of the 50S ribosomal subunit. Contacts protein L20.

Its function is as follows. This protein binds to 23S rRNA in the presence of protein L20. The sequence is that of Large ribosomal subunit protein bL21 from Pectobacterium atrosepticum (strain SCRI 1043 / ATCC BAA-672) (Erwinia carotovora subsp. atroseptica).